Consider the following 284-residue polypeptide: MKLVIVSGRSGSGKSVALRVLEDLGYYCVDNLPLPLIGTLLEQLKGSNDLVAISVDVRNMPEQDKVLVKQLASLPPDTELTSFFLNSSDKILLKRYSETRRLHPLSKSQVSLQEAIKLEGKLLEPMSKLVDHYIDTSNLNIYDLSDQVRQILLGSVDKELVINFESFGFKHGMPTEADFMFDVRFLPNPHWELALRPLTGLDEPVAEFLNRQPLVNKFIWQIENLLETWLPHLERNNRSYLTVAIGCTGGQHRSVYVAEQLAKRFSNGKHKVYARHRELNNAKA.

ATP is bound at residue 8–15 (GRSGSGKS). 56-59 (DVRN) contributes to the GTP binding site.

This sequence belongs to the RapZ-like family.

Functionally, displays ATPase and GTPase activities. This chain is Nucleotide-binding protein Sbal223_0704, found in Shewanella baltica (strain OS223).